The chain runs to 374 residues: DNA replication and repair protein RecF (374 aa).

30–37 provides a ligand contact to ATP; sequence GPNAQGKT.

This sequence belongs to the RecF family.

Its subcellular location is the cytoplasm. Functionally, the RecF protein is involved in DNA metabolism; it is required for DNA replication and normal SOS inducibility. RecF binds preferentially to single-stranded, linear DNA. It also seems to bind ATP. The protein is DNA replication and repair protein RecF of Lactobacillus johnsonii (strain CNCM I-12250 / La1 / NCC 533).